We begin with the raw amino-acid sequence, 40 residues long: Putative protein FAM86JP (40 aa).

The interval 1 to 40 (MPGAFSQNSSKRRAVLPRSHRVAGRGPAEAGCLPGAPAGS) is disordered. Over residues 10 to 23 (SKRRAVLPRSHRVA) the composition is skewed to basic residues.

The polypeptide is Putative protein FAM86JP (Homo sapiens (Human)).